A 217-amino-acid chain; its full sequence is MAPGSRTSLLLAFALLCLPWLQEAGAVQTVPLSRLFDHAMLQAHRAHQLAIDTYQEFEETYIPKDQKYSFLHDSQTSFCFSDSIPTPSNMEETQQKSNLELLRISLLLIESWLEPVRFLRSMFANNLVYDTSDSDDYHLLKDLEEGIQTLMGRLEDGSRRTGQILKQTYSKFDTNSHNHDALLKNYGLLYCFRKDMDKVETFLRMVQCRSVEGSCGF.

The first 26 residues, 1-26 (MAPGSRTSLLLAFALLCLPWLQEAGA), serve as a signal peptide directing secretion. His44 contributes to the Zn(2+) binding site. A disulfide bridge connects residues Cys79 and Cys191. Glu200 contacts Zn(2+). Residues Cys208 and Cys215 are joined by a disulfide bond.

This sequence belongs to the somatotropin/prolactin family. As to quaternary structure, can be found in a monomeric as well as dimeric form.

The protein localises to the secreted. In terms of biological role, produced only during pregnancy and is involved in stimulating lactation, fetal growth and metabolism. Does not interact with GHR but only activates PRLR through zinc-induced dimerization. In Homo sapiens (Human), this protein is Chorionic somatomammotropin hormone 1 (CSH1).